The following is a 224-amino-acid chain: 7-cyano-7-deazaguanine synthase (224 aa).

10-20 (VSGGLDSATVL) is an ATP binding site. Cys-189, Cys-199, Cys-202, and Cys-205 together coordinate Zn(2+).

The protein belongs to the QueC family. It depends on Zn(2+) as a cofactor.

The enzyme catalyses 7-carboxy-7-deazaguanine + NH4(+) + ATP = 7-cyano-7-deazaguanine + ADP + phosphate + H2O + H(+). It participates in purine metabolism; 7-cyano-7-deazaguanine biosynthesis. Catalyzes the ATP-dependent conversion of 7-carboxy-7-deazaguanine (CDG) to 7-cyano-7-deazaguanine (preQ(0)). The protein is 7-cyano-7-deazaguanine synthase of Nitrosococcus oceani (strain ATCC 19707 / BCRC 17464 / JCM 30415 / NCIMB 11848 / C-107).